The following is a 263-amino-acid chain: NADH dehydrogenase [ubiquinone] iron-sulfur protein 3, mitochondrial (263 aa).

Residues 1–35 (MVAAVARLWWRGLLGASALTRGAGRPSVLLLPVRR) constitute a mitochondrion transit peptide.

It belongs to the complex I 30 kDa subunit family. In terms of assembly, core subunit of respiratory chain NADH dehydrogenase (Complex I) which is composed of 45 different subunits. Interacts with NDUFAF3. Interacts with RAB5IF. Found in subcomplexes containing subunits NDUFS2, MT-ND1 and NDUFA13.

It localises to the mitochondrion inner membrane. The catalysed reaction is a ubiquinone + NADH + 5 H(+)(in) = a ubiquinol + NAD(+) + 4 H(+)(out). In terms of biological role, core subunit of the mitochondrial membrane respiratory chain NADH dehydrogenase (Complex I) which catalyzes electron transfer from NADH through the respiratory chain, using ubiquinone as an electron acceptor. Essential for the catalytic activity and assembly of complex I. This chain is NADH dehydrogenase [ubiquinone] iron-sulfur protein 3, mitochondrial (NDUFS3), found in Gorilla gorilla gorilla (Western lowland gorilla).